The primary structure comprises 491 residues: Cobyric acid synthase (491 aa).

In terms of domain architecture, GATase cobBQ-type spans 253 to 429; the sequence is ARRVAVIRLP…WHGALEGDEL (177 aa). Catalysis depends on C334, which acts as the Nucleophile. H421 is a catalytic residue.

It belongs to the CobB/CobQ family. CobQ subfamily.

The protein operates within cofactor biosynthesis; adenosylcobalamin biosynthesis. Its function is as follows. Catalyzes amidations at positions B, D, E, and G on adenosylcobyrinic A,C-diamide. NH(2) groups are provided by glutamine, and one molecule of ATP is hydrogenolyzed for each amidation. This chain is Cobyric acid synthase, found in Mycolicibacterium gilvum (strain PYR-GCK) (Mycobacterium gilvum (strain PYR-GCK)).